The sequence spans 632 residues: X-ray repair cross-complementing protein 5 (632 aa).

Catalysis depends on Arg52, which acts as the Schiff-base intermediate with DNA; for 5'-deoxyribose-5-phosphate lyase activity. Residues Leu283 to Lys490 form the Ku domain. A disordered region spans residues Asp555 to Lys578. Positions Leu595–Phe629 constitute an SAP domain.

Belongs to the ku70 family. Heterodimer composed of XRCC5/Ku80 and XRCC6/Ku70. Component of the core long-range non-homologous end joining (NHEJ) complex (also named DNA-PK complex) composed of PRKDC, LIG4, XRCC4, XRCC6/Ku70, XRCC5/Ku86 and NHEJ1/XLF. Additional component of the NHEJ complex includes PAXX. Following autophosphorylation, PRKDC dissociates from DNA, leading to formation of the short-range NHEJ complex, composed of LIG4, XRCC4, XRCC6/Ku70, XRCC5/Ku86 and NHEJ1/XLF. Phosphorylated on serine residues.

It is found in the nucleus. It localises to the chromosome. Its function is as follows. Single-stranded DNA-dependent ATP-dependent helicase that plays a key role in DNA non-homologous end joining (NHEJ) by recruiting DNA-PK to DNA. Required for double-strand break repair and V(D)J recombination. Also has a role in chromosome translocation. Has a role in chromosome translocation. The DNA helicase II complex binds preferentially to fork-like ends of double-stranded DNA in a cell cycle-dependent manner. It works in the 3'-5' direction. During NHEJ, the XRCC5-XRRC6 dimer performs the recognition step: it recognizes and binds to the broken ends of the DNA and protects them from further resection. Binding to DNA may be mediated by XRCC6. The XRCC5-XRRC6 dimer acts as a regulatory subunit of the DNA-dependent protein kinase complex DNA-PK by increasing the affinity of the catalytic subunit PRKDC to DNA by 100-fold. The XRCC5-XRRC6 dimer is probably involved in stabilizing broken DNA ends and bringing them together. The assembly of the DNA-PK complex to DNA ends is required for the NHEJ ligation step. Probably also acts as a 5'-deoxyribose-5-phosphate lyase (5'-dRP lyase), by catalyzing the beta-elimination of the 5' deoxyribose-5-phosphate at an abasic site near double-strand breaks. 5'-dRP lyase activity allows to 'clean' the termini of abasic sites, a class of nucleotide damage commonly associated with strand breaks, before such broken ends can be joined. The XRCC5-XRRC6 dimer together with APEX1 acts as a negative regulator of transcription. This chain is X-ray repair cross-complementing protein 5 (XRCC6), found in Gallus gallus (Chicken).